The sequence spans 911 residues: Chromatin assembly factor 1 subunit A (911 aa).

Positions 1-31 (MLEEPEAATRTAAAVDCKDRPGFPVKRLIQA) are binds PCNA. The interval 166–200 (HMEEEPGSPGDPKRTGDCQAGSLQSCPELTPGSRT) is disordered. The interval 176 to 327 (DPKRTGDCQA…LHRDREQQRE (152 aa)) is binds CBX1 and CBX3 chromo shadow domains. Over residues 186 to 200 (GSLQSCPELTPGSRT) the composition is skewed to polar residues. 2 positions are modified to phosphoserine: Ser190 and Ser208. Residues 217 to 230 (FIEKVPVVVLEDIL) carry the PxVxL motif motif. 2 disordered regions span residues 250 to 408 (SESE…EEEK) and 578 to 618 (DSDD…VPHG). Positions 265–281 (LSHSSTNSSSPTSSPEG) are enriched in low complexity. Ser293 bears the Phosphoserine mark. A compositionally biased stretch (basic and acidic residues) spans 310-408 (STEKGRSKLH…EEKRLREEEK (99 aa)). 2 stretches are compositionally biased toward acidic residues: residues 578–589 (DSDDEWEEEEPG) and 597–612 (GDED…EDDG). Positions 621–657 (SEDEGVTEECADPENHKVHQKLKAKEWDELLAKGKRF) are necessary for homodimerization and competence for chromatin assembly. Residues 639–911 (HQKLKAKEWD…APIPAPTLCK (273 aa)) form a binds to p60 region. Ser776 carries the phosphoserine modification. 2 disordered regions span residues 819-843 (PSAP…MLLK) and 866-886 (GSGD…DDTD). Residues 827–839 (GSASTEGPGQSTP) show a composition bias toward polar residues. Thr838 bears the Phosphothreonine mark. A compositionally biased stretch (acidic residues) spans 876–886 (DTEEDEEDDTD).

It belongs to the CHAF1A family. Homodimer. Part of the CAF-1 complex that contains RBBP4, CHAF1B and CHAF1A. CHAF1A binds directly to CHAF1B. Only minor amounts of RBBP4 are complexed with CHAF1A and CHAF1B in G1 phase. Interacts with PCNA; the interaction is direct. Interacts (via the PxVxL motif) with CBX5; the interaction is direct. Interacts with MBD1. Interacts with histones H3.1, H3.2 and H3.1t.

The protein localises to the nucleus. Its function is as follows. Acts as a component of the histone chaperone complex chromatin assembly factor 1 (CAF-1), which assembles histone octamers onto DNA during replication and repair. CAF-1 performs the first step of the nucleosome assembly process, bringing newly synthesized histones H3 and H4 to replicating DNA; histones H2A/H2B can bind to this chromatin precursor subsequent to DNA replication to complete the histone octamer. It may play a role in heterochromatin maintenance in proliferating cells by bringing newly synthesized cbx proteins to heterochromatic DNA replication foci. The sequence is that of Chromatin assembly factor 1 subunit A from Mus musculus (Mouse).